A 741-amino-acid chain; its full sequence is 1,4-alpha-glucan branching enzyme GlgB (741 aa).

Catalysis depends on Asp420, which acts as the Nucleophile. Glu473 acts as the Proton donor in catalysis.

It belongs to the glycosyl hydrolase 13 family. GlgB subfamily. In terms of assembly, monomer.

It catalyses the reaction Transfers a segment of a (1-&gt;4)-alpha-D-glucan chain to a primary hydroxy group in a similar glucan chain.. It functions in the pathway glycan biosynthesis; glycogen biosynthesis. In terms of biological role, catalyzes the formation of the alpha-1,6-glucosidic linkages in glycogen by scission of a 1,4-alpha-linked oligosaccharide from growing alpha-1,4-glucan chains and the subsequent attachment of the oligosaccharide to the alpha-1,6 position. This Pseudomonas syringae pv. syringae (strain B728a) protein is 1,4-alpha-glucan branching enzyme GlgB.